The sequence spans 274 residues: Large ribosomal subunit protein uL2 (274 aa).

The segment at 224 to 274 is disordered; the sequence is VAMNPVDHPHGGGEGRTSGGRHPVTPWGIPTKGYKTRRNKRSNKLIVQKRK. Positions 257–274 are enriched in basic residues; the sequence is YKTRRNKRSNKLIVQKRK.

It belongs to the universal ribosomal protein uL2 family. In terms of assembly, part of the 50S ribosomal subunit. Forms a bridge to the 30S subunit in the 70S ribosome.

Its function is as follows. One of the primary rRNA binding proteins. Required for association of the 30S and 50S subunits to form the 70S ribosome, for tRNA binding and peptide bond formation. It has been suggested to have peptidyltransferase activity; this is somewhat controversial. Makes several contacts with the 16S rRNA in the 70S ribosome. The polypeptide is Large ribosomal subunit protein uL2 (Francisella tularensis subsp. tularensis (strain FSC 198)).